We begin with the raw amino-acid sequence, 834 residues long: Copper-exporting P-type ATPase (834 aa).

Residues 2-186 (SQTIDLTLDG…TAVATMKRFR (185 aa)) lie on the Cytoplasmic side of the membrane. HMA domains are found at residues 3–64 (QTID…YDAS) and 99–162 (DSQQ…YGAE). Residues Cys14, Cys17, Cys110, and Cys113 each contribute to the Cu(+) site. 2 consecutive short sequence motifs (CXXC motif) follow at residues 14–17 (CGHC) and 110–113 (CASC). Residues 187–207 (WQAIVALAVGIPVMVWGMIGD) traverse the membrane as a helical segment. Over 208–217 (NMMVTADNRS) the chain is Periplasmic; loop 1. The chain crosses the membrane as a helical span at residues 218–238 (LWLVIGLITLAVMVFAGGHFY). Residues 239-253 (RSAWKSLLNGAATMD) lie on the Cytoplasmic side of the membrane. The chain crosses the membrane as a helical span at residues 254 to 274 (TLVALGTGVAWLYSMSVNLWP). Residues 275-283 (QWFPMEARH) lie on the Periplasmic; loop 2 side of the membrane. Residues 284-304 (LYYEASAMIIGLINLGHMLEA) traverse the membrane as a helical segment. Over 305–437 (RARQRSSKAL…EIGQLADKIS (133 aa)) the chain is Cytoplasmic. Residues 438-458 (AVFVPVVVVIALVSAAIWYFF) traverse the membrane as a helical segment. Residues 459-463 (GPAPQ) are Periplasmic; loop 3-facing. The helical transmembrane segment at 464 to 484 (IVYTLVIATTVLIIACPCALG) threads the bilayer. Residues 485-778 (LATPMSIISG…ATLHNMKQNL (294 aa)) are Cytoplasmic-facing. Asp523 (4-aspartylphosphate intermediate) is an active-site residue. Mg(2+) is bound by residues Asp720 and Asp724. Residues 779-799 (LGAFIYNSIGIPVAAGILWPF) traverse the membrane as a helical segment. Residue Thr800 is a topological domain, periplasmic; loop 4. The chain crosses the membrane as a helical span at residues 801–821 (GTLLNPVVAGAAMALSSITVV). The Cytoplasmic segment spans residues 822-834 (SNANRLLRFKPKE).

This sequence belongs to the cation transport ATPase (P-type) (TC 3.A.3) family. Type IB subfamily. In terms of assembly, copper-exporting P-type ATPase interacts with apo-periplasmic copper chaperone CusF; when CusF is precharged with copper it binds very little CopA. The periplasmic loops of CopA, especially the first half of loop 1, play a large role in binding to CusF.

Its subcellular location is the cell inner membrane. It localises to the cytoplasm. The catalysed reaction is Cu(+)(in) + ATP + H2O = Cu(+)(out) + ADP + phosphate + H(+). With respect to regulation, export is inhibited by vanadate. Phosphorylation is inhibited by vanadate and sensitive to KOH and hydroxylamine; it is not inhibited by azide. Phosphorylation is Cu(+) not Cu(2+)-dependent. ATPase activity is inhibited by bathocuproindisulfonate (BCDS), which chelates Cu(+) but not Cu(2+), and stimulated 3-4-fold by Cu(+). ATPase activity is inhibited by Cu(2+) plus DTT or Ag(+). Functionally, exports Cu(+) from the cytoplasm to the periplasm. Binds 2 Cu(+) ions per monomer, which are transferred to periplasmic copper chaperone CusF upon ATP hydrolysis. In vitro an excess of CusF over CopA is required for efficient transfer. May also be involved in silver export. In terms of biological role, mRNA is subject to programmed ribosomal frameshifting which produces a cytoplasmic copper chaperone CopA(Z) that corresponds to the first HMA domain. The soluble form is essential for cell survivial in the presence of CuSO(4); in growth competition experiments between wild-type and a version that prevents expression of CopA(Z) after 50 generations the non-CopA(Z) version is nearly extinct. The first HMA domain (residues 1-70) can be replaced by B.subtilis Cu chaperone CopZ. This is Copper-exporting P-type ATPase from Escherichia coli (strain K12).